We begin with the raw amino-acid sequence, 126 residues long: uncharacterized protein (126 aa).

Positions 1-27 are cleaved as a signal peptide; it reads MKNLFIFLSLMMMFVLTACGGSKYDDA. Residues 93-126 form a disordered region; the sequence is MTDMPGNGENDRLGLSKKTPDYEEVKGEETELEE. Basic and acidic residues predominate over residues 101–126; that stretch reads ENDRLGLSKKTPDYEEVKGEETELEE.

This is an uncharacterized protein from Bacillus subtilis (strain 168).